A 385-amino-acid polypeptide reads, in one-letter code: Aspartate carbamoyltransferase 2, chloroplastic (385 aa).

The N-terminal 30 residues, 1-30 (MTASSSLFSCSMHMEVLTPKISKWPKNFVS), are a transit peptide targeting the chloroplast. Carbamoyl phosphate is bound by residues Arg131 and Thr132. UMP is bound by residues Arg131 and Thr132. Lys161 serves as a coordination point for L-aspartate. Positions 182, 210, and 213 each coordinate carbamoyl phosphate. The UMP site is built by Arg182 and His210. The UMP site is built by Arg243 and Arg305. 2 residues coordinate L-aspartate: Arg243 and Arg305. Residues Leu345 and Pro346 each contribute to the carbamoyl phosphate site.

The protein belongs to the aspartate/ornithine carbamoyltransferase superfamily. ATCase family. As to quaternary structure, homotrimer.

The protein localises to the plastid. It is found in the chloroplast. It catalyses the reaction carbamoyl phosphate + L-aspartate = N-carbamoyl-L-aspartate + phosphate + H(+). The protein operates within pyrimidine metabolism; UMP biosynthesis via de novo pathway; (S)-dihydroorotate from bicarbonate: step 2/3. Feedback inhibited by UMP. Functionally, catalyzes the condensation of carbamoyl phosphate and aspartate to form carbamoyl aspartate and inorganic phosphate, the committed step in the de novo pyrimidine nucleotide biosynthesis pathway. This is Aspartate carbamoyltransferase 2, chloroplastic (PYRB2) from Pisum sativum (Garden pea).